A 103-amino-acid chain; its full sequence is Large ribosomal subunit protein bL21 (103 aa).

This sequence belongs to the bacterial ribosomal protein bL21 family. As to quaternary structure, part of the 50S ribosomal subunit. Contacts protein L20.

Its function is as follows. This protein binds to 23S rRNA in the presence of protein L20. The polypeptide is Large ribosomal subunit protein bL21 (Legionella pneumophila (strain Paris)).